Here is a 235-residue protein sequence, read N- to C-terminus: Small ribosomal subunit protein mS23 (235 aa).

The tract at residues P51–N71 is disordered.

Belongs to the mitochondrion-specific ribosomal protein mS23 family. In terms of assembly, component of the mitochondrial small ribosomal subunit.

The protein localises to the mitochondrion. The chain is Small ribosomal subunit protein mS23 (RSM25) from Chaetomium globosum (strain ATCC 6205 / CBS 148.51 / DSM 1962 / NBRC 6347 / NRRL 1970) (Soil fungus).